The chain runs to 36 residues: Photosystem I reaction center subunit VIII (36 aa).

The chain crosses the membrane as a helical span at residues 8 to 28 (AILVPIVGLVFPALSMALFFI).

It belongs to the PsaI family.

The protein localises to the plastid. It localises to the chloroplast thylakoid membrane. Its function is as follows. May help in the organization of the PsaL subunit. This is Photosystem I reaction center subunit VIII from Phaeodactylum tricornutum (strain CCAP 1055/1).